A 208-amino-acid polypeptide reads, in one-letter code: Ribosomal RNA large subunit methyltransferase E (208 aa).

The S-adenosyl-L-methionine site is built by glycine 62, tryptophan 64, aspartate 82, aspartate 98, and aspartate 123. Lysine 163 acts as the Proton acceptor in catalysis.

This sequence belongs to the class I-like SAM-binding methyltransferase superfamily. RNA methyltransferase RlmE family.

It localises to the cytoplasm. The catalysed reaction is uridine(2552) in 23S rRNA + S-adenosyl-L-methionine = 2'-O-methyluridine(2552) in 23S rRNA + S-adenosyl-L-homocysteine + H(+). In terms of biological role, specifically methylates the uridine in position 2552 of 23S rRNA at the 2'-O position of the ribose in the fully assembled 50S ribosomal subunit. The protein is Ribosomal RNA large subunit methyltransferase E of Actinobacillus succinogenes (strain ATCC 55618 / DSM 22257 / CCUG 43843 / 130Z).